The primary structure comprises 209 residues: RNA chaperone ProQ (209 aa).

Residues E105 to A148 form a disordered region.

It belongs to the ProQ family.

Its subcellular location is the cytoplasm. Its function is as follows. RNA chaperone with significant RNA binding, RNA strand exchange and RNA duplexing activities. The sequence is that of RNA chaperone ProQ from Shewanella baltica (strain OS223).